The sequence spans 201 residues: Holliday junction branch migration complex subunit RuvA (201 aa).

The domain I stretch occupies residues methionine 1–alanine 63. Positions aspartate 64–serine 142 are domain II. Residues alanine 143 to serine 151 form a flexible linker region. The interval alanine 152–leucine 201 is domain III.

This sequence belongs to the RuvA family. In terms of assembly, homotetramer. Forms an RuvA(8)-RuvB(12)-Holliday junction (HJ) complex. HJ DNA is sandwiched between 2 RuvA tetramers; dsDNA enters through RuvA and exits via RuvB. An RuvB hexamer assembles on each DNA strand where it exits the tetramer. Each RuvB hexamer is contacted by two RuvA subunits (via domain III) on 2 adjacent RuvB subunits; this complex drives branch migration. In the full resolvosome a probable DNA-RuvA(4)-RuvB(12)-RuvC(2) complex forms which resolves the HJ.

The protein localises to the cytoplasm. The RuvA-RuvB-RuvC complex processes Holliday junction (HJ) DNA during genetic recombination and DNA repair, while the RuvA-RuvB complex plays an important role in the rescue of blocked DNA replication forks via replication fork reversal (RFR). RuvA specifically binds to HJ cruciform DNA, conferring on it an open structure. The RuvB hexamer acts as an ATP-dependent pump, pulling dsDNA into and through the RuvAB complex. HJ branch migration allows RuvC to scan DNA until it finds its consensus sequence, where it cleaves and resolves the cruciform DNA. This is Holliday junction branch migration complex subunit RuvA from Bacteroides thetaiotaomicron (strain ATCC 29148 / DSM 2079 / JCM 5827 / CCUG 10774 / NCTC 10582 / VPI-5482 / E50).